The sequence spans 1343 residues: DNA-directed RNA polymerase subunit beta (1343 aa).

It belongs to the RNA polymerase beta chain family. As to quaternary structure, the RNAP catalytic core consists of 2 alpha, 1 beta, 1 beta' and 1 omega subunit. When a sigma factor is associated with the core the holoenzyme is formed, which can initiate transcription.

It carries out the reaction RNA(n) + a ribonucleoside 5'-triphosphate = RNA(n+1) + diphosphate. DNA-dependent RNA polymerase catalyzes the transcription of DNA into RNA using the four ribonucleoside triphosphates as substrates. The polypeptide is DNA-directed RNA polymerase subunit beta (Haemophilus influenzae (strain ATCC 51907 / DSM 11121 / KW20 / Rd)).